Consider the following 483-residue polypeptide: Glutamate mutase epsilon subunit (483 aa).

Residue R66 participates in L-glutamate binding. An adenosylcob(III)alamin-binding site is contributed by G68. Residue R100 coordinates L-glutamate. N123 serves as a coordination point for adenosylcob(III)alamin. L-glutamate contacts are provided by residues 149-150 (RH), E171, and Y177. P180 contacts adenosylcob(III)alamin. Y181 is a binding site for L-glutamate. Positions 297, 326, 330, and 334 each coordinate adenosylcob(III)alamin.

It belongs to the methylaspartate mutase GlmE subunit family. As to quaternary structure, heterotetramer composed of 2 epsilon subunits (GlmE) and 2 sigma subunits (GlmS). GlmE exists as a homodimer and GlmS as a monomer. Adenosylcob(III)alamin serves as cofactor.

It carries out the reaction (2S,3S)-3-methyl-L-aspartate = L-glutamate. It participates in amino-acid degradation; L-glutamate degradation via mesaconate pathway; acetate and pyruvate from L-glutamate: step 1/4. Its activity is regulated as follows. Competitively inhibited by (2S,4S)-4-fluoroglutamate, 2-methyleneglutarate, (2R,3RS)-3-fluoroglutamate and (S)-3-methylitaconate. Functionally, catalyzes the carbon skeleton rearrangement of L-glutamate to L-threo-3-methylaspartate ((2S,3S)-3-methylaspartate). The chain is Glutamate mutase epsilon subunit from Clostridium cochlearium.